Here is a 278-residue protein sequence, read N- to C-terminus: Shikimate dehydrogenase (NADP(+)) (278 aa).

Shikimate contacts are provided by residues 14–16 (SKS) and Thr-61. The active-site Proton acceptor is the Lys-65. Asn-86 and Asp-102 together coordinate shikimate. NADP(+)-binding positions include 127–131 (GAGGA), 151–156 (NRTASK), and Met-221. A shikimate-binding site is contributed by Tyr-223. Residue Gly-245 coordinates NADP(+).

The protein belongs to the shikimate dehydrogenase family. As to quaternary structure, homodimer.

The enzyme catalyses shikimate + NADP(+) = 3-dehydroshikimate + NADPH + H(+). It participates in metabolic intermediate biosynthesis; chorismate biosynthesis; chorismate from D-erythrose 4-phosphate and phosphoenolpyruvate: step 4/7. Functionally, involved in the biosynthesis of the chorismate, which leads to the biosynthesis of aromatic amino acids. Catalyzes the reversible NADPH linked reduction of 3-dehydroshikimate (DHSA) to yield shikimate (SA). This chain is Shikimate dehydrogenase (NADP(+)), found in Saccharophagus degradans (strain 2-40 / ATCC 43961 / DSM 17024).